The sequence spans 629 residues: 1-deoxy-D-xylulose-5-phosphate synthase (629 aa).

Thiamine diphosphate-binding positions include H78 and 119-121; that span reads AHS. Residue D150 participates in Mg(2+) binding. Thiamine diphosphate contacts are provided by residues 151-152, N179, Y286, and E368; that span reads GA. A Mg(2+)-binding site is contributed by N179.

Belongs to the transketolase family. DXPS subfamily. As to quaternary structure, homodimer. The cofactor is Mg(2+). Thiamine diphosphate serves as cofactor.

The catalysed reaction is D-glyceraldehyde 3-phosphate + pyruvate + H(+) = 1-deoxy-D-xylulose 5-phosphate + CO2. It participates in metabolic intermediate biosynthesis; 1-deoxy-D-xylulose 5-phosphate biosynthesis; 1-deoxy-D-xylulose 5-phosphate from D-glyceraldehyde 3-phosphate and pyruvate: step 1/1. In terms of biological role, catalyzes the acyloin condensation reaction between C atoms 2 and 3 of pyruvate and glyceraldehyde 3-phosphate to yield 1-deoxy-D-xylulose-5-phosphate (DXP). The protein is 1-deoxy-D-xylulose-5-phosphate synthase of Acidovorax sp. (strain JS42).